We begin with the raw amino-acid sequence, 251 residues long: Triosephosphate isomerase (251 aa).

Substrate is bound at residue 9-11 (NWK). The active-site Electrophile is H96. E168 (proton acceptor) is an active-site residue. Substrate is bound by residues G174, S214, and 235–236 (GG).

Belongs to the triosephosphate isomerase family. In terms of assembly, homodimer.

Its subcellular location is the cytoplasm. The catalysed reaction is D-glyceraldehyde 3-phosphate = dihydroxyacetone phosphate. The protein operates within carbohydrate biosynthesis; gluconeogenesis. It participates in carbohydrate degradation; glycolysis; D-glyceraldehyde 3-phosphate from glycerone phosphate: step 1/1. Functionally, involved in the gluconeogenesis. Catalyzes stereospecifically the conversion of dihydroxyacetone phosphate (DHAP) to D-glyceraldehyde-3-phosphate (G3P). This is Triosephosphate isomerase from Porphyromonas gingivalis (strain ATCC 33277 / DSM 20709 / CIP 103683 / JCM 12257 / NCTC 11834 / 2561).